The sequence spans 492 residues: Glutamyl-tRNA(Gln) amidotransferase subunit A (492 aa).

Active-site charge relay system residues include K78 and S158. S182 serves as the catalytic Acyl-ester intermediate.

Belongs to the amidase family. GatA subfamily. As to quaternary structure, heterotrimer of A, B and C subunits.

The enzyme catalyses L-glutamyl-tRNA(Gln) + L-glutamine + ATP + H2O = L-glutaminyl-tRNA(Gln) + L-glutamate + ADP + phosphate + H(+). In terms of biological role, allows the formation of correctly charged Gln-tRNA(Gln) through the transamidation of misacylated Glu-tRNA(Gln) in organisms which lack glutaminyl-tRNA synthetase. The reaction takes place in the presence of glutamine and ATP through an activated gamma-phospho-Glu-tRNA(Gln). This Zymomonas mobilis subsp. mobilis (strain ATCC 31821 / ZM4 / CP4) protein is Glutamyl-tRNA(Gln) amidotransferase subunit A.